Consider the following 54-residue polypeptide: Lectin alpha-1 chain (54 aa).

The protein belongs to the leguminous lectin family. In terms of assembly, tetramer of two alpha and two beta chains.

This is Lectin alpha-1 chain from Lathyrus hirsutus (Rough pea).